The sequence spans 88 residues: uncharacterized protein (88 aa).

Residues 1–31 (MIPRDPRSPAPDLSAINQPAGRAERRSGPAT) are disordered.

This is an uncharacterized protein from Escherichia coli.